A 68-amino-acid polypeptide reads, in one-letter code: Adipokinetic prohormone type 1 (68 aa).

Residues 1 to 20 form the signal peptide; the sequence is MNKIYFVIVFVACFCLFAEA. Residue Gln-21 is modified to Pyrrolidone carboxylic acid. Gly-30 carries the post-translational modification Glycine amide. The propeptide occupies 34 to 68; it reads SGVAPMSCKNEEAVATIFKLIQNEAERFIICQQKS.

As to expression, expressed in antennal lobe (AL), corpora cardiaca (CC), corpora allata (CA) and gnathal ganglion (GNG) (at protein level). Expression in CC and CA detected in all animals, expression in GNG in some animals and in AL in few animals (at protein level).

It localises to the secreted. In terms of biological role, this hormone, released from cells in the corpora cardiaca, causes release of diglycerides from the fat body and stimulation of muscles to use these diglycerides as an energy source during energy-demanding processes. The polypeptide is Adipokinetic prohormone type 1 (Agrotis ipsilon (Black cutworm moth)).